The sequence spans 63 residues: Large ribosomal subunit protein bL35 (63 aa).

Belongs to the bacterial ribosomal protein bL35 family.

This chain is Large ribosomal subunit protein bL35, found in Campylobacter jejuni subsp. doylei (strain ATCC BAA-1458 / RM4099 / 269.97).